Here is a 357-residue protein sequence, read N- to C-terminus: 3-isopropylmalate dehydrogenase (357 aa).

Gly-76 to Glu-89 lines the NAD(+) pocket. 4 residues coordinate substrate: Arg-96, Arg-106, Arg-134, and Asp-224. Asp-224, Asp-248, and Asp-252 together coordinate Mg(2+). Residue Gly-282–Asn-294 participates in NAD(+) binding.

The protein belongs to the isocitrate and isopropylmalate dehydrogenases family. LeuB type 1 subfamily. Homodimer. Requires Mg(2+) as cofactor. Mn(2+) is required as a cofactor.

Its subcellular location is the cytoplasm. The catalysed reaction is (2R,3S)-3-isopropylmalate + NAD(+) = 4-methyl-2-oxopentanoate + CO2 + NADH. Its pathway is amino-acid biosynthesis; L-leucine biosynthesis; L-leucine from 3-methyl-2-oxobutanoate: step 3/4. Functionally, catalyzes the oxidation of 3-carboxy-2-hydroxy-4-methylpentanoate (3-isopropylmalate) to 3-carboxy-4-methyl-2-oxopentanoate. The product decarboxylates to 4-methyl-2 oxopentanoate. This is 3-isopropylmalate dehydrogenase from Xanthomonas campestris pv. campestris (strain 8004).